The chain runs to 446 residues: Methylenetetrahydrofolate--tRNA-(uracil-5-)-methyltransferase TrmFO (446 aa).

8-13 (GGGLAG) is a binding site for FAD.

Belongs to the MnmG family. TrmFO subfamily. The cofactor is FAD.

Its subcellular location is the cytoplasm. The catalysed reaction is uridine(54) in tRNA + (6R)-5,10-methylene-5,6,7,8-tetrahydrofolate + NADH + H(+) = 5-methyluridine(54) in tRNA + (6S)-5,6,7,8-tetrahydrofolate + NAD(+). It carries out the reaction uridine(54) in tRNA + (6R)-5,10-methylene-5,6,7,8-tetrahydrofolate + NADPH + H(+) = 5-methyluridine(54) in tRNA + (6S)-5,6,7,8-tetrahydrofolate + NADP(+). Functionally, catalyzes the folate-dependent formation of 5-methyl-uridine at position 54 (M-5-U54) in all tRNAs. The sequence is that of Methylenetetrahydrofolate--tRNA-(uracil-5-)-methyltransferase TrmFO from Zymomonas mobilis subsp. mobilis (strain ATCC 31821 / ZM4 / CP4).